The following is a 331-amino-acid chain: Undecaprenyl-phosphate 4-deoxy-4-formamido-L-arabinose transferase (331 aa).

2 helical membrane passes run 236–256 (LSIV…FLIL) and 270–290 (VFPL…GLGL).

The protein belongs to the glycosyltransferase 2 family.

Its subcellular location is the cell inner membrane. It carries out the reaction UDP-4-deoxy-4-formamido-beta-L-arabinose + di-trans,octa-cis-undecaprenyl phosphate = 4-deoxy-4-formamido-alpha-L-arabinopyranosyl di-trans,octa-cis-undecaprenyl phosphate + UDP. It participates in glycolipid biosynthesis; 4-amino-4-deoxy-alpha-L-arabinose undecaprenyl phosphate biosynthesis; 4-amino-4-deoxy-alpha-L-arabinose undecaprenyl phosphate from UDP-4-deoxy-4-formamido-beta-L-arabinose and undecaprenyl phosphate: step 1/2. Its pathway is bacterial outer membrane biogenesis; lipopolysaccharide biosynthesis. Catalyzes the transfer of 4-deoxy-4-formamido-L-arabinose from UDP to undecaprenyl phosphate. The modified arabinose is attached to lipid A and is required for resistance to polymyxin and cationic antimicrobial peptides. The sequence is that of Undecaprenyl-phosphate 4-deoxy-4-formamido-L-arabinose transferase from Shewanella sediminis (strain HAW-EB3).